The sequence spans 546 residues: Probable ganciclovir kinase (546 aa).

The span at 1-11 (MEQLKTPQNQK) shows a compositional bias: polar residues. The segment at 1 to 29 (MEQLKTPQNQKTRPRNMLPKKKGKELKKR) is disordered. The segment covering 12–29 (TRPRNMLPKKKGKELKKR) has biased composition (basic residues). Residues 185 to 193 (LGSGSYGMV) and K202 contribute to the ATP site. The Proton acceptor role is filled by D297.

The protein belongs to the protein kinase superfamily. Tyr protein kinase family. HCMV ganciclovir subfamily.

In terms of biological role, phosphorylates the antiviral nucleoside analog ganciclovir. The polypeptide is Probable ganciclovir kinase (U69) (Human herpesvirus 7 (strain JI) (HHV-7)).